Here is a 411-residue protein sequence, read N- to C-terminus: Serine hydroxymethyltransferase (411 aa).

(6S)-5,6,7,8-tetrahydrofolate is bound at residue 120-122; sequence GHL. Lysine 225 bears the N6-(pyridoxal phosphate)lysine mark. (6S)-5,6,7,8-tetrahydrofolate contacts are provided by residues glutamate 241 and 350–352; that span reads SPF.

Belongs to the SHMT family. Homodimer. Pyridoxal 5'-phosphate serves as cofactor.

The protein localises to the cytoplasm. It catalyses the reaction (6R)-5,10-methylene-5,6,7,8-tetrahydrofolate + glycine + H2O = (6S)-5,6,7,8-tetrahydrofolate + L-serine. Its pathway is one-carbon metabolism; tetrahydrofolate interconversion. The protein operates within amino-acid biosynthesis; glycine biosynthesis; glycine from L-serine: step 1/1. In terms of biological role, catalyzes the reversible interconversion of serine and glycine with tetrahydrofolate (THF) serving as the one-carbon carrier. This reaction serves as the major source of one-carbon groups required for the biosynthesis of purines, thymidylate, methionine, and other important biomolecules. Also exhibits THF-independent aldolase activity toward beta-hydroxyamino acids, producing glycine and aldehydes, via a retro-aldol mechanism. The protein is Serine hydroxymethyltransferase of Limosilactobacillus fermentum (strain NBRC 3956 / LMG 18251) (Lactobacillus fermentum).